The primary structure comprises 310 residues: Isoflavone reductase homolog A622-like (310 aa).

NADP(+) contacts are provided by residues 13-19 (GGTGYIG), Arg38, and Lys47. Catalysis depends on Lys135, which acts as the Proton acceptor. Arg139 is an NADP(+) binding site.

The protein belongs to the NmrA-type oxidoreductase family. Isoflavone reductase subfamily. Monomer. Expressed in roots.

The protein resides in the cytoplasm. Its pathway is alkaloid biosynthesis; nicotine biosynthesis. Involved in the biosynthesis of pyridine alkaloid natural products, leading mainly to the production of anabasine, anatabine, nicotine and nornicotine, effective deterrents against herbivores with antiparasitic and pesticide properties (neurotoxins); nornicotine serves as the precursor in the synthesis of the carcinogen compound N'-nitrosonornicotine (NNN). Reductase that may be involved in a late step of tobacco alkaloid biosynthesis. Maybe involved in either the formation of a nicotinic acid-derived precursor or the final condensation reaction of tobacco alkaloids. The chain is Isoflavone reductase homolog A622-like from Nicotiana tabacum (Common tobacco).